The sequence spans 465 residues: Phenylalanine--tRNA ligase alpha subunit (465 aa).

Positions 311 and 389 each coordinate L-phenylalanine. Glutamate 391 is a binding site for Mg(2+).

This sequence belongs to the class-II aminoacyl-tRNA synthetase family. Phe-tRNA synthetase alpha subunit type 2 subfamily. As to quaternary structure, tetramer of two alpha and two beta subunits. It depends on Mg(2+) as a cofactor.

Its subcellular location is the cytoplasm. The catalysed reaction is tRNA(Phe) + L-phenylalanine + ATP = L-phenylalanyl-tRNA(Phe) + AMP + diphosphate + H(+). The protein is Phenylalanine--tRNA ligase alpha subunit of Metallosphaera sedula (strain ATCC 51363 / DSM 5348 / JCM 9185 / NBRC 15509 / TH2).